The following is a 475-amino-acid chain: MWVVGLIGVAVVTILITQYVYKWRNPKTVGVLPPGSMGLPLIGETLQLLSRNPSLDLHPFIKSRIQRYGQIFATNIVGRPIIVTADPQLNNYLFQQEGRAVELWYLDSFQKLFNLEGANRPNAVGHIHKYVRSVYLSLFGVESLKTKLLADIEKTVRKNLIGGTTKGTFDAKHASANMVAVFAAKYLFGHDYEKSKEDVGSIIDNFVQGLLAFPLNVPGTKFHKCMKDKKRLESMITNKLKERIADPNSGQGDFLDQAVKDLNSEFFITETFIVSVTMGALFATVESVSTAIGLAFKFFAEHPWVLDDLKAEHEAVLSKREDRNSPLTWDEYRSMTHTMHFINEVVRLGNVFPGILRKALKDIPYNGYTIPSGWTIMIVTSTLAMNPEIFKDPLAFNPKRWRDIDPETQTKNFMPFGGGTRQCAGAELAKAFFATFLHVLISEYSWKKVKGGSVARTPMLSFEDGIFIEVTKKNK.

Residues V3 to W23 traverse the membrane as a helical segment. Residue C423 participates in heme binding.

This sequence belongs to the cytochrome P450 family. Requires heme as cofactor.

It is found in the membrane. It carries out the reaction beta-amyrin + reduced [NADPH--hemoprotein reductase] + O2 = 16alpha-hydroxy-beta-amyrin + oxidized [NADPH--hemoprotein reductase] + H2O + H(+). Its function is as follows. Involved in the biosynthetic pathway of maesasaponins, which are oleanane-type saponins with diverse biological activities. Catalyzes the C-16alpha oxidation of beta-amyrin to form 16alpha-hydroxy-beta-amyrin. The sequence is that of Beta-amyrin 16-alpha-hydroxylase CYP87D16 from Maesa lanceolata (False assegai).